A 202-amino-acid polypeptide reads, in one-letter code: Na(+)-translocating NADH-quinone reductase subunit E (202 aa).

A run of 6 helical transmembrane segments spans residues 11-31 (AVFVENMALAFFLGMCTFIAI), 35-55 (VETAIGLGVAVIVVLGITMPV), 79-99 (LSFLGLLTFIGVIAALVQILE), 114-134 (GVFLPLITVNCAIMGGSLFMV), 144-164 (TVYGIGAGVSWALAIAALAGI), and 180-200 (LGITFITIGLMSLGFMSFSGV).

The protein belongs to the NqrDE/RnfAE family. In terms of assembly, composed of six subunits; NqrA, NqrB, NqrC, NqrD, NqrE and NqrF.

The protein localises to the cell inner membrane. It catalyses the reaction a ubiquinone + n Na(+)(in) + NADH + H(+) = a ubiquinol + n Na(+)(out) + NAD(+). Its function is as follows. NQR complex catalyzes the reduction of ubiquinone-1 to ubiquinol by two successive reactions, coupled with the transport of Na(+) ions from the cytoplasm to the periplasm. NqrA to NqrE are probably involved in the second step, the conversion of ubisemiquinone to ubiquinol. The polypeptide is Na(+)-translocating NADH-quinone reductase subunit E (Ectopseudomonas mendocina (strain ymp) (Pseudomonas mendocina)).